We begin with the raw amino-acid sequence, 273 residues long: Salivary glue protein Sgs-3 (273 aa).

An N-terminal signal peptide occupies residues 1–23; the sequence is MKLTIAISLASILLLSVAHVAQG. Positions 47–57 are enriched in low complexity; it reads TTTTTTTTCAP. The disordered stretch occupies residues 47-225; that stretch reads TTTTTTTTCA…TPKPTNKPGC (179 aa). Pro residues predominate over residues 58–67; sequence PTRPPPPPCT. The segment covering 83-225 has biased composition (low complexity); the sequence is RRTTTTTRQT…TPKPTNKPGC (143 aa).

This chain is Salivary glue protein Sgs-3 (Sgs3), found in Drosophila yakuba (Fruit fly).